The sequence spans 449 residues: Bifunctional protein GlmU (449 aa).

Residues 1–225 (MLSVAILAAG…NGELQGINNR (225 aa)) form a pyrophosphorylase region. Residues 7–10 (LAAG), Lys21, Gln73, and 78–79 (GT) each bind UDP-N-acetyl-alpha-D-glucosamine. A Mg(2+)-binding site is contributed by Asp103. UDP-N-acetyl-alpha-D-glucosamine-binding residues include Gly140, Glu154, Asn169, and Asn223. Asn223 lines the Mg(2+) pocket. Residues 226-246 (IHLSECEECIQNSIKEKHMLN) are linker. The tract at residues 247-449 (GVTFINKASC…NIENWKKKKS (203 aa)) is N-acetyltransferase. 2 residues coordinate UDP-N-acetyl-alpha-D-glucosamine: Arg328 and Lys346. His358 serves as the catalytic Proton acceptor. UDP-N-acetyl-alpha-D-glucosamine is bound by residues Tyr361 and Asn372. Ala375, Ala418, and Arg435 together coordinate acetyl-CoA.

In the N-terminal section; belongs to the N-acetylglucosamine-1-phosphate uridyltransferase family. The protein in the C-terminal section; belongs to the transferase hexapeptide repeat family. Homotrimer. Mg(2+) is required as a cofactor.

It localises to the cytoplasm. It carries out the reaction alpha-D-glucosamine 1-phosphate + acetyl-CoA = N-acetyl-alpha-D-glucosamine 1-phosphate + CoA + H(+). The catalysed reaction is N-acetyl-alpha-D-glucosamine 1-phosphate + UTP + H(+) = UDP-N-acetyl-alpha-D-glucosamine + diphosphate. It functions in the pathway nucleotide-sugar biosynthesis; UDP-N-acetyl-alpha-D-glucosamine biosynthesis; N-acetyl-alpha-D-glucosamine 1-phosphate from alpha-D-glucosamine 6-phosphate (route II): step 2/2. Its pathway is nucleotide-sugar biosynthesis; UDP-N-acetyl-alpha-D-glucosamine biosynthesis; UDP-N-acetyl-alpha-D-glucosamine from N-acetyl-alpha-D-glucosamine 1-phosphate: step 1/1. The protein operates within bacterial outer membrane biogenesis; LPS lipid A biosynthesis. In terms of biological role, catalyzes the last two sequential reactions in the de novo biosynthetic pathway for UDP-N-acetylglucosamine (UDP-GlcNAc). The C-terminal domain catalyzes the transfer of acetyl group from acetyl coenzyme A to glucosamine-1-phosphate (GlcN-1-P) to produce N-acetylglucosamine-1-phosphate (GlcNAc-1-P), which is converted into UDP-GlcNAc by the transfer of uridine 5-monophosphate (from uridine 5-triphosphate), a reaction catalyzed by the N-terminal domain. This Prochlorococcus marinus (strain AS9601) protein is Bifunctional protein GlmU.